The chain runs to 495 residues: Glutamate--tRNA ligase (495 aa).

The 'HIGH' region signature appears at 13–23 (PSPTGTPHVGL). Positions 257–261 (KLSKR) match the 'KMSKS' region motif. Lysine 260 contacts ATP.

It belongs to the class-I aminoacyl-tRNA synthetase family. Glutamate--tRNA ligase type 1 subfamily. Monomer.

The protein localises to the cytoplasm. It catalyses the reaction tRNA(Glu) + L-glutamate + ATP = L-glutamyl-tRNA(Glu) + AMP + diphosphate. Catalyzes the attachment of glutamate to tRNA(Glu) in a two-step reaction: glutamate is first activated by ATP to form Glu-AMP and then transferred to the acceptor end of tRNA(Glu). The chain is Glutamate--tRNA ligase from Mycolicibacterium vanbaalenii (strain DSM 7251 / JCM 13017 / BCRC 16820 / KCTC 9966 / NRRL B-24157 / PYR-1) (Mycobacterium vanbaalenii).